The following is a 137-amino-acid chain: Probable calcium-binding protein CML33 (137 aa).

EF-hand domains lie at 1-36 (MNNMSLSDIFERFDTSKDGKISWEEFRDAIHALSPS), 37-72 (IPSEKLVEMFIQLDTNGDGQVDAAKFASCMDQTAQS), 76-111 (DVEKELKDAFKLYDINCDGKISANELHVVMTRLGEK), and 112-137 (CTVESCVGMVQAIDVDGDGYIRFVGV). Ca(2+) contacts are provided by Asp-14, Ser-16, Asp-18, Lys-20, and Glu-25. Ca(2+)-binding residues include Asp-89, Asn-91, Asp-93, Lys-95, and Glu-100.

In terms of biological role, potential calcium sensor. This is Probable calcium-binding protein CML33 (CML33) from Arabidopsis thaliana (Mouse-ear cress).